Here is a 600-residue protein sequence, read N- to C-terminus: Phosphoenolpyruvate carboxykinase (ATP) (600 aa).

302–309 contacts ATP; that stretch reads GLSGTGKT.

Belongs to the phosphoenolpyruvate carboxykinase (ATP) family.

The enzyme catalyses oxaloacetate + ATP = phosphoenolpyruvate + ADP + CO2. Its pathway is carbohydrate biosynthesis; gluconeogenesis. In Emericella nidulans (strain FGSC A4 / ATCC 38163 / CBS 112.46 / NRRL 194 / M139) (Aspergillus nidulans), this protein is Phosphoenolpyruvate carboxykinase (ATP) (acuF).